The chain runs to 192 residues: Sarcoplasmic calcium-binding protein 1 (192 aa).

Position 1 is an N-acetylalanine (A1). 4 consecutive EF-hand domains span residues W4–I39, I56–G91, A100–F135, and A136–F171. Residues D17, D19, N21, D28, D69, N71, D73, E75, E80, D113, N115, D117, and E124 each contribute to the Ca(2+) site.

As to quaternary structure, SCPs from crayfish, lobster, and shrimp are polymorphic dimers.

Its function is as follows. Like parvalbumins, SCPs seem to be more abundant in fast contracting muscles, but no functional relationship can be established from this distribution. This Astacus leptodactylus (Turkish narrow-clawed crayfish) protein is Sarcoplasmic calcium-binding protein 1.